Consider the following 266-residue polypeptide: uncharacterized protein (266 aa).

It belongs to the chlamydial CPn_0087/CT_309/TC_0583 family.

This is an uncharacterized protein from Chlamydia pneumoniae (Chlamydophila pneumoniae).